The following is a 243-amino-acid chain: Mitochondrial import inner membrane translocase subunit TIM17-2 (243 aa).

Transmembrane regions (helical) follow at residues 19–36 (IGGAFGMGAVGGSAFHFI), 66–83 (FAVWGGLFSTFDCTMVYL), 90–109 (WNSIIAGAATGGFLSMRQGA), and 115–137 (SAIFGGVLLALIEGAGIMLNKVL). Repeat copies occupy residues 149–151 (GMQ), 152–154 (GMP), 155–157 (GMQ), 158–160 (GMQ), 161–163 (GMP), 164–166 (GMP), 167–169 (GMQ), 170–172 (GMP), 173–175 (GMQ), and 176–178 (GMQ). The interval 149–178 (GMQGMPGMQGMQGMPGMPGMQGMPGMQGMQ) is 10 X approximate repeats GMQ/P. Low complexity predominate over residues 166-183 (PGMQGMPGMQGMQMGQMQ). Residues 166 to 243 (PGMQGMPGMQ…APPVPSFEFK (78 aa)) are disordered. A compositionally biased stretch (polar residues) spans 184-198 (SQAQIRSESQNQNTA). Over residues 211–228 (FDKKKEEVQPGSESKTEV) the composition is skewed to basic and acidic residues.

The protein belongs to the Tim17/Tim22/Tim23 family. As to quaternary structure, component of the TIM17:23 complex at least composed of TIM23, TIM17 and TIM50. The complex interacts with the TIM44 component of the PAM complex. Interacts with TIM23-2. As to expression, expressed in roots, flowers, leaves and young cotyledons.

It localises to the mitochondrion inner membrane. It is found in the mitochondrion outer membrane. Essential component of the TIM17:23 complex, a complex that mediates the translocation of transit peptide-containing proteins across the mitochondrial inner membrane. Links the inner and outer membranes. This is Mitochondrial import inner membrane translocase subunit TIM17-2 (TIM17-2) from Arabidopsis thaliana (Mouse-ear cress).